Here is a 265-residue protein sequence, read N- to C-terminus: uncharacterized protein (265 aa).

Serine 223 is subject to Phosphoserine.

This is an uncharacterized protein from Saccharomyces cerevisiae (strain ATCC 204508 / S288c) (Baker's yeast).